We begin with the raw amino-acid sequence, 84 residues long: Putative pelota-like protein YCL001W-B (84 aa).

The protein belongs to the eukaryotic release factor 1 family. Pelota subfamily. Highly divergent.

The sequence is that of Putative pelota-like protein YCL001W-B from Saccharomyces cerevisiae (strain ATCC 204508 / S288c) (Baker's yeast).